Consider the following 532-residue polypeptide: Chondroitin sulfate N-acetylgalactosaminyltransferase 1 (532 aa).

Residues 1–14 (MMMVRRGLLAWISR) lie on the Cytoplasmic side of the membrane. The chain crosses the membrane as a helical; Signal-anchor for type II membrane protein span at residues 15–35 (VVVLLVLLCCAISVLYMLACT). Over 36 to 532 (PKGDEEQLAL…QKQKTSSKKT (497 aa)) the chain is Lumenal. A coiled-coil region spans residues 57 to 100 (YQAVLQEWEEQHRNYVSSLKRQIAQLKEELQERSEQLRNGQYQA). N-linked (GlcNAc...) asparagine glycosylation is found at Asn315 and Asn324. A divalent metal cation is bound by residues Asp360 and His477.

It belongs to the chondroitin N-acetylgalactosaminyltransferase family. N-glycosylated. Ubiquitous, with the highest levels in placenta, thyroid, bladder, prostate and adrenal gland. Detected at low levels in the other tissues examined.

It localises to the golgi apparatus. Its subcellular location is the golgi stack membrane. The catalysed reaction is 3-O-(beta-D-GlcA-(1-&gt;3)-beta-D-Gal-(1-&gt;3)-beta-D-Gal-(1-&gt;4)-beta-D-Xyl)-L-seryl-[protein] + UDP-N-acetyl-alpha-D-galactosamine = 3-O-(beta-D-GalNAc-(1-&gt;4)-beta-D-GlcA-(1-&gt;3)-beta-D-Gal-(1-&gt;3)-beta-D-Gal-(1-&gt;4)-beta-D-Xyl)-L-seryl-[protein] + UDP + H(+). Its function is as follows. Transfers 1,4-N-acetylgalactosamine (GalNAc) from UDP-GalNAc to the non-reducing end of glucuronic acid (GlcUA). Required for addition of the first GalNAc to the core tetrasaccharide linker and for elongation of chondroitin chains. Important role in chondroitin chain biosynthesis in cartilage formation and subsequent endochondral ossification. Moreover, is involved in the metabolism of aggrecan. The chain is Chondroitin sulfate N-acetylgalactosaminyltransferase 1 from Homo sapiens (Human).